The chain runs to 250 residues: mRNA-decapping protein g5R (250 aa).

The Nudix hydrolase domain occupies 97–239 (QKFRKNWLLP…NLEPMIGPAF (143 aa)). Residues 132-153 (GKPKEDESDLTCAIREFEEETG) carry the Nudix box motif. Glutamate 138 provides a ligand contact to Mg(2+). Glutamate 147 serves as the catalytic Nucleophile. Glutamate 151 and aspartate 173 together coordinate Mg(2+).

Belongs to the Nudix hydrolase family. DIPP subfamily. Interacts with host RPL23A. Mg(2+) is required as a cofactor. The cofactor is Mn(2+).

It is found in the host rough endoplasmic reticulum. It catalyses the reaction diphospho-myo-inositol polyphosphate + H2O = myo-inositol polyphosphate + phosphate.. Decapping enzyme required for the removal of the 5'-end m7GpppN cap tethered to viral and host mRNAs to allow their decay in cells. May therefore accelerate viral and cellular mRNA turnover to eliminate competing host mRNAs and allow stage-specific synthesis of viral proteins. Acceleration of the turnover of cellular transcripts may even promote the shutoff of host protein synthesis. In addition to the mRNA cap, g5R also efficiently hydrolyzes diphosphoinositol polyphosphates. Down-regulation of the level of PP-InsP5 (diphosphoinositol pentakisphosphate) may play a role in viral manipulation of the cellular secretory pathway, a step necessary for the formation of virions. Binds viral and cellular poly(A) mRNAs, thereby decreasing both types of mRNAs. The protein is mRNA-decapping protein g5R of Ornithodoros (relapsing fever ticks).